The sequence spans 313 residues: MNKLVFCLMGPTASGKTGLACELLTHFPFEIISVDSAMIYRDMNIGTAKPSIHELQRAPHYLIDIKDPVESYSAAQFCTDALSLCAEIIKRGNIPLLVGGTMMYFNALQKGLATLPEADEAVRKRLEEEALSQGWDFLYQKLSQLDPVTAARIHAHDTQRIQRALEVYYLTGSTLSTYLTGPHEQPDYYFVNLALFPEQRSWLHERIAQRFDAMLSEGFIEEVQQLQAKWPIQINLPAMRCVGYRQILEYLAGHYDYETMREKGIAATRQLAKRQLTWLRHWEGALFYDSQNVGFNTDIIAKIREILDNTVSN.

10–17 provides a ligand contact to ATP; the sequence is GPTASGKT. 12–17 contacts substrate; the sequence is TASGKT. Interaction with substrate tRNA regions lie at residues 35 to 38, 159 to 163, and 240 to 245; these read DSAM, QRIQR, and RCVGYR.

Belongs to the IPP transferase family. Monomer. Mg(2+) is required as a cofactor.

The catalysed reaction is adenosine(37) in tRNA + dimethylallyl diphosphate = N(6)-dimethylallyladenosine(37) in tRNA + diphosphate. Catalyzes the transfer of a dimethylallyl group onto the adenine at position 37 in tRNAs that read codons beginning with uridine, leading to the formation of N6-(dimethylallyl)adenosine (i(6)A). The polypeptide is tRNA dimethylallyltransferase (Legionella pneumophila (strain Corby)).